The sequence spans 452 residues: Tubulin alpha-2/alpha-4 chain (452 aa).

Gln11 provides a ligand contact to GTP. Lys40 is modified (N6-acetyllysine). Residues Glu71, Ser140, Gly144, Thr145, Thr179, Asn206, and Asn228 each coordinate GTP. Position 71 (Glu71) interacts with Mg(2+). Glu254 is an active-site residue. The disordered stretch occupies residues 432–452 (YEEVGVDSVEGEGEEEGGEEY).

This sequence belongs to the tubulin family. As to quaternary structure, dimer of alpha and beta chains. A typical microtubule is a hollow water-filled tube with an outer diameter of 25 nm and an inner diameter of 15 nM. Alpha-beta heterodimers associate head-to-tail to form protofilaments running lengthwise along the microtubule wall with the beta-tubulin subunit facing the microtubule plus end conferring a structural polarity. Microtubules usually have 13 protofilaments but different protofilament numbers can be found in some organisms and specialized cells. Mg(2+) is required as a cofactor. In terms of processing, undergoes a tyrosination/detyrosination cycle, the cyclic removal and re-addition of a C-terminal tyrosine residue by the enzymes tubulin tyrosine carboxypeptidase (TTCP) and tubulin tyrosine ligase (TTL), respectively. Acetylation of alpha chains at Lys-40 stabilizes microtubules and affects affinity and processivity of microtubule motors. This modification has a role in multiple cellular functions, ranging from cell motility, cell cycle progression or cell differentiation to intracellular trafficking and signaling.

It is found in the cytoplasm. The protein localises to the cytoskeleton. The catalysed reaction is GTP + H2O = GDP + phosphate + H(+). Functionally, tubulin is the major constituent of microtubules, a cylinder consisting of laterally associated linear protofilaments composed of alpha- and beta-tubulin heterodimers. Microtubules grow by the addition of GTP-tubulin dimers to the microtubule end, where a stabilizing cap forms. Below the cap, tubulin dimers are in GDP-bound state, owing to GTPase activity of alpha-tubulin. The protein is Tubulin alpha-2/alpha-4 chain (TUB2) of Patella vulgata (Common limpet).